The sequence spans 647 residues: Paraneoplastic antigen Ma6E (647 aa).

4 disordered regions span residues 111–199, 227–254, 508–580, and 608–647; these read QPQG…AGGA, GAAGEAGGAGEAGAAGEAGGAGEGRAAG, AAAP…VPWG, and RGQEARKPPLEGLQTILEEPENEDEDGAGDEGQPKSSQGK. Composition is skewed to gly residues over residues 122 to 149, 158 to 199, and 227 to 251; these read GEGGGAGEAGGVGEVGAAGEAGGTGEAG, GEAG…AGGA, and GAAGEAGGAGEAGAAGEAGGAGEGR. Residues 517 to 570 are compositionally biased toward low complexity; sequence PAAAQASPAQGNASEAGPGAEDAAEAASATKEAARGAPAAGEGESAPAGPEGLG. Residues 625-636 show a composition bias toward acidic residues; it reads EEPENEDEDGAG.

This is Paraneoplastic antigen Ma6E from Homo sapiens (Human).